The sequence spans 320 residues: ATP synthase gamma chain (320 aa).

It belongs to the ATPase gamma chain family. F-type ATPases have 2 components, CF(1) - the catalytic core - and CF(0) - the membrane proton channel. CF(1) has five subunits: alpha(3), beta(3), gamma(1), delta(1), epsilon(1). CF(0) has three main subunits: a, b and c.

It localises to the cell membrane. In terms of biological role, produces ATP from ADP in the presence of a proton gradient across the membrane. The gamma chain is believed to be important in regulating ATPase activity and the flow of protons through the CF(0) complex. This is ATP synthase gamma chain from Lactobacillus delbrueckii subsp. bulgaricus (strain ATCC 11842 / DSM 20081 / BCRC 10696 / JCM 1002 / NBRC 13953 / NCIMB 11778 / NCTC 12712 / WDCM 00102 / Lb 14).